Here is a 323-residue protein sequence, read N- to C-terminus: ATP synthase gamma chain (323 aa).

It belongs to the ATPase gamma chain family. In terms of assembly, F-type ATPases have 2 components, CF(1) - the catalytic core - and CF(0) - the membrane proton channel. CF(1) has five subunits: alpha(3), beta(3), gamma(1), delta(1), epsilon(1). CF(0) has three main subunits: a, b and c.

It localises to the cell inner membrane. Its function is as follows. Produces ATP from ADP in the presence of a proton gradient across the membrane. The gamma chain is believed to be important in regulating ATPase activity and the flow of protons through the CF(0) complex. This chain is ATP synthase gamma chain, found in Rickettsia peacockii (strain Rustic).